A 658-amino-acid polypeptide reads, in one-letter code: MERQFEIVSAYSPQGDQPVAIEKLVEGINSGKKKQVLLGATGTGKTFTISNVIKEVQKPTLVMAHNKTLAGQLYSELKDFFPNNAVEYFVSYYDYYQPEAYVPQTDTFIEKDAQINDEIDKLRHSATSALFERDDVIIVASVSCIYGLGSPEEYRELVVSLRVGMEKDRNQLLRELVDVQYGRNDIDFKRGTFRVRGDVVEIFPASLDEHCIRIEFFGDEIDRIREVNALTGEVLAERDHVAIFPASHFVTREEKMKVAIENIEKELEERLKELNDNGKLLEAQRIEQRTRYDLEMMREMGFCSGIENYSRHLTLRPAGATPYTLLDYFPKDFLIVMDESHVSVPQVRAMYNGDQARKQVLVDHGFRLPSALDNRPLTFDEFEEKTNQVIYVSATPGPYELEQSPEVIEQIIRPTGLLDPPIDIRPIEGQIDDLLGEIQDRIAKNERVLITTLTKKMSEDLTDYLKDVGIKVNYLHSEVKTLERIEIIRDLRLGKFDVLVGINLLREGLDIPEVSLVAILDADKEGFLRSERSLIQTIGRAARNENGRVIMYADRITRSMEIAIEETKRRRSIQEAYNEEHGITPKTIQKGVRDVIRATTAAEETETYEATPAKKMTKKEREKTIAKMEAEMKEAAKALDFERAAELRDLLLELKAEG.

The Helicase ATP-binding domain occupies 26–413 (EGINSGKKKQ…SPEVIEQIIR (388 aa)). 39–46 (GATGTGKT) lines the ATP pocket. Positions 92-115 (YYDYYQPEAYVPQTDTFIEKDAQI) match the Beta-hairpin motif. Residues 430–596 (QIDDLLGEIQ…TIQKGVRDVI (167 aa)) enclose the Helicase C-terminal domain. The UVR domain maps to 622–657 (EKTIAKMEAEMKEAAKALDFERAAELRDLLLELKAE).

Belongs to the UvrB family. Forms a heterotetramer with UvrA during the search for lesions. Interacts with UvrC in an incision complex.

Its subcellular location is the cytoplasm. Functionally, the UvrABC repair system catalyzes the recognition and processing of DNA lesions. A damage recognition complex composed of 2 UvrA and 2 UvrB subunits scans DNA for abnormalities. Upon binding of the UvrA(2)B(2) complex to a putative damaged site, the DNA wraps around one UvrB monomer. DNA wrap is dependent on ATP binding by UvrB and probably causes local melting of the DNA helix, facilitating insertion of UvrB beta-hairpin between the DNA strands. Then UvrB probes one DNA strand for the presence of a lesion. If a lesion is found the UvrA subunits dissociate and the UvrB-DNA preincision complex is formed. This complex is subsequently bound by UvrC and the second UvrB is released. If no lesion is found, the DNA wraps around the other UvrB subunit that will check the other stand for damage. The protein is UvrABC system protein B of Bacillus cereus (strain ATCC 10987 / NRS 248).